A 478-amino-acid polypeptide reads, in one-letter code: Probable serine carboxypeptidase CPVL (478 aa).

Positions 1 to 22 (MVRAKWKMVVSLILFMVSPGDG) are cleaved as a signal peptide. N-linked (GlcNAc...) asparagine glycosylation is found at Asn83 and Asn134. The active site involves Ser206. N-linked (GlcNAc...) asparagine glycans are attached at residues Asn309 and Asn350. Catalysis depends on residues Asp390 and His450.

The protein belongs to the peptidase S10 family.

Its function is as follows. May be involved in the digestion of phagocytosed particles in the lysosome, participation in an inflammatory protease cascade, and trimming of peptides for antigen presentation. The chain is Probable serine carboxypeptidase CPVL (Cpvl) from Mus musculus (Mouse).